We begin with the raw amino-acid sequence, 402 residues long: Serine/threonine-protein phosphatase 4 regulatory subunit 2 (402 aa).

The segment covering 206 to 248 has biased composition (acidic residues); sequence MDEEFEDEDYEDHEDEEEDEEDEDNDSDVDEMEAEEVEEDASD. Disordered regions lie at residues 206 to 270, 291 to 311, and 331 to 402; these read MDEE…DVTD, SVLS…ILSR, and GFIT…KKRM. The segment covering 348-358 has biased composition (low complexity); it reads SSSSMVSPVVS. A compositionally biased stretch (polar residues) spans 371–396; sequence INTFISPDTTNSVTQAEKNELSTSPL.

Belongs to the PPP4R2 family. In terms of assembly, regulatory subunit (R2) of the histone H2A phosphatase complex (HTP-C) consisting of PPH3, PSY2 and PSY4.

Its subcellular location is the nucleus. Functionally, regulatory subunit of the histone H2A phosphatase complex, which dephosphorylates H2AS128ph (gamma-H2A) that has been displaced from sites of DNA lesions in the double-stranded DNA break repair process. Dephosphorylation is necessary for efficient recovery from the DNA damage checkpoint. The polypeptide is Serine/threonine-protein phosphatase 4 regulatory subunit 2 (PSY4) (Kluyveromyces lactis (strain ATCC 8585 / CBS 2359 / DSM 70799 / NBRC 1267 / NRRL Y-1140 / WM37) (Yeast)).